The following is a 704-amino-acid chain: MSIVLIIVIVVIFLICFLYLSNSNNKNDANKNNAFIDLNPLPLNATTATTTTAVATTTTNNNNSIVAFRQNNIQELQNFERWFKNNLSYSFSQKAEKVVNPNRNWNDNTVFDNLSPWTSVPDFGTVCHTLIGYCVRYNNTSDTLYQNPELAYNLINGLRIICSKLPDPPPHQQAPWGPVADWYHFTITMPEVFMNITIVLNETQHYDEAASLTRYWLGLYLPTAVNSMGWHRTAGNSMRMGVPYTYSQILRGYSLAQIRQEQGIQEILNTIAFPYVTQGNGLHVDSIYIDHIDVRAYGYLINSYFTFAYYTYYFGDEVINTVGLTRAIENVGSPEGVVVPGVMSRNGTLYSNVIGNFITYPLAVHSADYSKVLTKLSKTYYGSVVGVTNRLAYYESDPTNNIQAPLWTMARRIWNRRGRIINYNANTVSFESGIILQSLNGIMRIPSGTTSTQSFRPTIGQTAIAKTDTAGAILVYAKFAEMNNLQFKSCTLFYDHGMFQLYYNIGVEPNSLNNTNGRVIVLSRDTSVNTNDLSFEAQRINNNNSSEGTTFNGVVCHRVPITNINVPSLTVRSPNSSVELVEQIISFQTMYTATASACYKLNVEGHSDSLRAFRVNSDENIYVNVGNGVKALFNYPWVMVKENNKVSFMSANEDTTIPFSVIMNSFTSIGEPALQYSPSNCFVYGNGFKLNNSTFDLQFIFEIV.

The first 23 residues, 1–23 (MSIVLIIVIVVIFLICFLYLSNS), serve as a signal peptide directing secretion. Active-site proton acceptor residues include N236 and H291. Residue Y299 is the Proton donor of the active site.

It belongs to the baculoviridae E66 family.

The protein localises to the virion membrane. It is found in the host nucleus. The protein resides in the host cytoplasm. Functionally, component of the polyhedra envelope. Plays an essential role in oral infectivity. May digest, with its chondroitin lyase activity, the chondroitin sulfate barrier of the peritrophic matrix of the host midgut to facilitate viral infection in the epithelial cells. The polypeptide is Non-sulfated chondroitin lyase E66 (P79) (Lepidoptera (butterflies and moths)).